We begin with the raw amino-acid sequence, 105 residues long: Phosphoribosyl-AMP cyclohydrolase (105 aa).

D72 provides a ligand contact to Mg(2+). Zn(2+) is bound at residue C73. Residues D74 and D76 each contribute to the Mg(2+) site. The Zn(2+) site is built by C89 and C96.

The protein belongs to the PRA-CH family. Homodimer. It depends on Mg(2+) as a cofactor. Requires Zn(2+) as cofactor.

The protein resides in the cytoplasm. The catalysed reaction is 1-(5-phospho-beta-D-ribosyl)-5'-AMP + H2O = 1-(5-phospho-beta-D-ribosyl)-5-[(5-phospho-beta-D-ribosylamino)methylideneamino]imidazole-4-carboxamide. The protein operates within amino-acid biosynthesis; L-histidine biosynthesis; L-histidine from 5-phospho-alpha-D-ribose 1-diphosphate: step 3/9. In terms of biological role, catalyzes the hydrolysis of the adenine ring of phosphoribosyl-AMP. This chain is Phosphoribosyl-AMP cyclohydrolase, found in Listeria monocytogenes serotype 4a (strain HCC23).